We begin with the raw amino-acid sequence, 1080 residues long: MIDSSKKQPQGFPEILTAEDFEPFKEKECLEGSNQKSLKEVLQLRLQQRRTREQLVDQGIMPPLKSPAAFHEQIKSLERARTENFLKHKIRSRPDRSELVRMHILEETFAEPSLQATQMKLKRARLADDLNEKIAQRPGPMELVEKNILPVDSSVKEAIIGVVKEDYPHTHGEFSFDEDSSDALSPDQPASQESQGSAASPSEPKVSASPPPVTASTPAQFTSVSPAVPEFLKTPLTADQPPTRSTAPVLPTNTVSSAKSGPMLVKQSHPKNPNDKHRSKKCKDPKPRVKKLKYHQYIPPNQKGEKSEPQMDSNYARLLQQQQLFLQLQILSQQQQQQQQQHYNYQTILPAPIKTDKNSSSGSNSGSSSSMPARRPGPLPSSLDDLKVSELKTELKLRGLPVSGTKPDLIERLKPYQEVTSSNLATGSIVAVSSATIVTSNPEVTVALPVTTLHNAVTSSVSTFKADLALPATSSVPHVENAHSPLPISPSPSEQSSLSTDDTNMTDTFTEIMTMMSPSQLLCSSPLRVVSHDDSLSPSSSTLSTLELDAAEKDRKLQEKEKQIEELKRKLEQEQKLVEVLKMQLEVEKRGQQRPPDPQPSDPPHPFNTSDPKHGSVGSSIKDEASLPDCSSPQQPITVPGHSVGQPISTGSQTLVAKKTVVVKQEVPMAQAEQQNVVSQFYLSSQGQPPALVAQPQALLTTQTTQLLLPVSIQGSNVTSVQLPVGSLQLQTPAQGRVQAQPHVAAATQVPAAALPSALTSALPQKQEAFPQHVLGQPQPVRKVFTNSAPNTVLQYQRQPGPTNQQPFVSKTSNPALQSRTAPLAPLQNGPSLASKPSSPPPPQQFVVQHSLFATPITKTKDPPRYEEAIKQTRSTQPALPEVSSVHSQQMDDLFDILIKSGEISFPIKEEPSPISKMKPVTASITTMPVNTVVSRPPPQVQIAPPVSLEPVNSLSASLENQLEAFLDGTLPSATDTGPLQNSSEDRESFSLIEDLQNDLLSHSSMLYQSHSPMETSEAQLVSGTPCLSLDLSDSNLDNMEWLDITMPTTSSGLTPLSTTAPSMFSADFLDPQDLPLPWD.

Residues 40–65 (EVLQLRLQQRRTREQLVDQGIMPPLK) form an RPEL 1 repeat. At serine 66 the chain carries Phosphoserine. RPEL repeat units lie at residues 84-109 (NFLKHKIRSRPDRSELVRMHILEETF) and 128-153 (DDLNEKIAQRPGPMELVEKNILPVDS). Disordered stretches follow at residues 170-222 (THGE…AQFT), 234-311 (TPLT…EPQM), 352-384 (PIKTDKNSSSGSNSGSSSSMPARRPGPLPSSLD), and 477-501 (PHVENAHSPLPISPSPSEQSSLSTD). Composition is skewed to polar residues over residues 188–200 (QPASQESQGSAAS) and 240–259 (QPPTRSTAPVLPTNTVSSAK). Residues 272–287 (NPNDKHRSKKCKDPKP) show a composition bias toward basic and acidic residues. Low complexity predominate over residues 358-370 (NSSSGSNSGSSSS). The 35-residue stretch at 383–417 (LDDLKVSELKTELKLRGLPVSGTKPDLIERLKPYQ) folds into the SAP domain. Phosphoserine occurs at positions 531, 535, and 537. Positions 539 to 594 (SSSTLSTLELDAAEKDRKLQEKEKQIEELKRKLEQEQKLVEVLKMQLEVEKRGQQR) form a coiled coil. Residues 557–585 (LQEKEKQIEELKRKLEQEQKLVEVLKMQL) are required for interaction with itself and with MRTFA. Disordered stretches follow at residues 588–646 (EKRG…SVGQ) and 794–846 (LQYQ…PQQF). Positions 595-606 (PPDPQPSDPPHP) are enriched in pro residues. Lysine 622 is covalently cross-linked (Glycyl lysine isopeptide (Lys-Gly) (interchain with G-Cter in SUMO1)). A compositionally biased stretch (polar residues) spans 794–821 (LQYQRQPGPTNQQPFVSKTSNPALQSRT). Serine 913 bears the Phosphoserine mark. Residues 969-988 (GTLPSATDTGPLQNSSEDRE) are disordered. Over residues 972–983 (PSATDTGPLQNS) the composition is skewed to polar residues.

In terms of assembly, interacts with MRTFA and SRF. In terms of processing, O-glycosylated. In terms of tissue distribution, widely expressed. High expression in heart, brain and testis. Lower expression in lung, liver and kidney.

The protein resides in the nucleus. Acts as a transcriptional coactivator of serum response factor (SRF). Required for skeletal myogenic differentiation. The chain is Myocardin-related transcription factor B (Mrtfb) from Mus musculus (Mouse).